We begin with the raw amino-acid sequence, 1115 residues long: Neural cell adhesion molecule 1 (1115 aa).

The signal sequence occupies residues 1–19 (MLRTKDLIWTLFFLGTAVS). 5 Ig-like C2-type domains span residues 20-111 (LQVD…ATVN), 116-205 (QKLM…KDIQ), 212-302 (PTVQ…ASIH), 309-402 (PKIT…MYLE), and 407-492 (PKLQ…ESLE). Topologically, residues 20-711 (LQVDIVPSQG…NGSPTAGLST (692 aa)) are extracellular. Disulfide bonds link C41–C96 and C139–C189. Residues 152–156 (KHKGR) and 161–165 (KKDVR) each bind heparin. A glycan (N-linked (GlcNAc...) asparagine; partial) is linked at N222. C235 and C288 are joined by a disulfide. N-linked (GlcNAc...) asparagine glycans are attached at residues N316, N348, N424, N450, and N479. The cysteines at positions 330 and 386 are disulfide-linked. A disulfide bond links C427 and C480. Fibronectin type-III domains lie at 500-599 (TPSS…TQPV) and 601-696 (EPSA…SAQP). T706 is lipidated: GPI-anchor amidated serine. Residues 712–729 (GAIVGILIVIFVLLLVVM) form a helical membrane-spanning segment. Over 730–1115 (DITCYFLNKC…TQTKENESKA (386 aa)) the chain is Cytoplasmic. Disordered stretches follow at residues 756 to 809 (GAKG…TEPE), 839 to 912 (FATA…SASN), and 924 to 1115 (VLSP…ESKA). The segment covering 758–799 (KGKDMEEGKAAFSKDESKEPIVEVRTEEERTPNHDGGKHTEP) has biased composition (basic and acidic residues). Residues S770 and S774 each carry the phosphoserine modification. Low complexity-rich tracts occupy residues 800–809 (NETTPLTEPE), 845–856 (SPTSETTTLTSS), and 876–896 (TPSKGVTASSSSPASAPKVAP). Phosphoserine occurs at positions 887 and 890. Polar residues-rich tracts occupy residues 902–912 (DTPTSAPSASN) and 926–935 (SPSTPASAGE). S926 carries the post-translational modification Phosphoserine. T929 is modified (phosphothreonine). Low complexity-rich tracts occupy residues 936–974 (TSKAPPASKASPAPTPTPAGAASPLAAVAAPATDAPQAK) and 999–1012 (AATAPASPKSKAAT). Residues S946 and S958 each carry the phosphoserine modification. T1001 is modified (phosphothreonine). At S1005 the chain carries Phosphoserine. 2 stretches are compositionally biased toward basic and acidic residues: residues 1019-1037 (EDLKMDEGNFKTPDIDLAK) and 1074-1091 (KTEKGPVETKSEPPESEA). Position 1030 is a phosphothreonine (T1030).

In terms of assembly, interacts with MDK. Found in a complex with SLC39A6, SLC39A10 and with NCAM1; this complex controls NCAM1 phosphorylation and integration into focal adhesion complexes during epithelial-tomesenchymal transition. Interacts with synaptic plasticity regulator PANTS. Polysialylated by ST8SIA2 and ST8SIA4. Polysialylation modulates cell interactions by confering both attractive and repulsive properties that are highly regulated by ST8SIA2 and ST8SIA4. Polysialylation is formed on a-2,3-linked sialic acid of core glycans.

The protein resides in the cell membrane. In terms of biological role, this protein is a cell adhesion molecule involved in neuron-neuron adhesion, neurite fasciculation, outgrowth of neurites, etc. This is Neural cell adhesion molecule 1 from Mus musculus (Mouse).